A 530-amino-acid chain; its full sequence is Chaperonin GroEL 2 (530 aa).

ATP is bound by residues 30-33 (TLGP), lysine 51, 87-91 (DGTTT), glycine 415, 479-481 (NAA), and aspartate 495.

This sequence belongs to the chaperonin (HSP60) family. Forms a cylinder of 14 subunits composed of two heptameric rings stacked back-to-back. Interacts with the co-chaperonin GroES.

The protein resides in the cytoplasm. It carries out the reaction ATP + H2O + a folded polypeptide = ADP + phosphate + an unfolded polypeptide.. Its function is as follows. Together with its co-chaperonin GroES, plays an essential role in assisting protein folding. The GroEL-GroES system forms a nano-cage that allows encapsulation of the non-native substrate proteins and provides a physical environment optimized to promote and accelerate protein folding. The chain is Chaperonin GroEL 2 from Vibrio cholerae serotype O1 (strain ATCC 39315 / El Tor Inaba N16961).